A 313-amino-acid polypeptide reads, in one-letter code: Ribosomal RNA small subunit methyltransferase H (313 aa).

S-adenosyl-L-methionine is bound by residues 34-36 (GGH), Asp55, Phe82, Asp103, and Gln110.

Belongs to the methyltransferase superfamily. RsmH family.

Its subcellular location is the cytoplasm. The enzyme catalyses cytidine(1402) in 16S rRNA + S-adenosyl-L-methionine = N(4)-methylcytidine(1402) in 16S rRNA + S-adenosyl-L-homocysteine + H(+). Specifically methylates the N4 position of cytidine in position 1402 (C1402) of 16S rRNA. In Pelobacter propionicus (strain DSM 2379 / NBRC 103807 / OttBd1), this protein is Ribosomal RNA small subunit methyltransferase H.